The sequence spans 502 residues: Membrane-bound lytic murein transglycosylase F (502 aa).

The N-terminal stretch at 1–33 (MSRFISTFRSSSAQLSIVLAVILATGCSQPTTL) is a signal peptide. The tract at residues 34 to 264 (QEIREEGVLH…QLAERFYGHL (231 aa)) is non-LT domain. The interval 265-502 (DRLNYVGART…PELRLIPPTL (238 aa)) is LT domain. The active site involves E311. The tract at residues 457 to 502 (PSASGLEDQLAWLGDNEAGPEAPAKESQPDLRADLPPELRLIPPTL) is disordered. Positions 479–493 (PAKESQPDLRADLPP) are enriched in basic and acidic residues.

This sequence in the N-terminal section; belongs to the bacterial solute-binding protein 3 family. It in the C-terminal section; belongs to the transglycosylase Slt family.

It is found in the cell outer membrane. The enzyme catalyses Exolytic cleavage of the (1-&gt;4)-beta-glycosidic linkage between N-acetylmuramic acid (MurNAc) and N-acetylglucosamine (GlcNAc) residues in peptidoglycan, from either the reducing or the non-reducing ends of the peptidoglycan chains, with concomitant formation of a 1,6-anhydrobond in the MurNAc residue.. In terms of biological role, murein-degrading enzyme that degrades murein glycan strands and insoluble, high-molecular weight murein sacculi, with the concomitant formation of a 1,6-anhydromuramoyl product. Lytic transglycosylases (LTs) play an integral role in the metabolism of the peptidoglycan (PG) sacculus. Their lytic action creates space within the PG sacculus to allow for its expansion as well as for the insertion of various structures such as secretion systems and flagella. This is Membrane-bound lytic murein transglycosylase F from Marinobacter nauticus (strain ATCC 700491 / DSM 11845 / VT8) (Marinobacter aquaeolei).